A 1519-amino-acid chain; its full sequence is Dicer-like protein 1 (1519 aa).

Positions 1–13 (MTHQNTETASLAT) are enriched in polar residues. The interval 1 to 62 (MTHQNTETAS…KDPSQRQRQQ (62 aa)) is disordered. Acidic residues predominate over residues 39 to 48 (SDESEGSEEE). The 182-residue stretch at 116–297 (LFERAKVQNT…EAARNLEALL (182 aa)) folds into the Helicase ATP-binding domain. 129–136 (LDTGSGKT) contacts ATP. The DEAH box signature appears at 242-245 (DEAH). Residues 431-601 (ALSSKVRVLW…QLLPEDRILH (171 aa)) form the Helicase C-terminal domain. The region spanning 634–724 (AITVLARYAS…NSVYHRRLPA (91 aa)) is the Dicer dsRNA-binding fold domain. Positions 882–1001 (DDIEYQADMP…ICIEPLKISA (120 aa)) constitute a PAZ domain. RNase III domains are found at residues 1026–1184 (GLEA…LTPG) and 1235–1387 (CRRV…VDSN). Residues Glu1275, Asp1373, and Glu1376 each coordinate Mg(2+). Positions 1421–1489 (TFLHNKLTNE…SENALTELLH (69 aa)) constitute a DRBM domain. Residues Cys1433, His1460, Cys1501, and Cys1503 each contribute to the Zn(2+) site.

This sequence belongs to the helicase family. Dicer subfamily. The cofactor is Mg(2+). Mn(2+) serves as cofactor.

Its function is as follows. Dicer-like endonuclease involved in cleaving double-stranded RNA in the RNA interference (RNAi) pathway. Produces 21 to 25 bp dsRNAs (siRNAs) which target the selective destruction of homologous RNAs leading to sequence-specific suppression of gene expression, called post-transcriptional gene silencing (PTGS). Part of a broad host defense response against viral infection and transposons. The protein is Dicer-like protein 1 (dcl1) of Aspergillus terreus (strain NIH 2624 / FGSC A1156).